The following is a 466-amino-acid chain: Ras GTPase-activating protein-binding protein 1 (466 aa).

One can recognise an NTF2 domain in the interval 11–133 (VGREFVRQYY…FYVHNDIFRY (123 aa)). Glycyl lysine isopeptide (Lys-Gly) (interchain with G-Cter in ubiquitin) cross-links involve residues lysine 36, lysine 50, lysine 59, lysine 64, lysine 76, and lysine 123. Residues 142–225 (VTEPQEESEE…EPVLEETAPE (84 aa)) form an acidic disordered region region. Position 143 is a phosphothreonine (threonine 143). 2 disordered regions span residues 144–172 (EPQEESEEEVEEPEERQQTPEVVPDDSGT) and 184–243 (EEHL…QTVQ). Acidic residues-rich tracts occupy residues 145–157 (PQEESEEEVEEPE) and 185–206 (EHLEEPVAEPEPDPEPEPEQEP). At serine 149 the chain carries Phosphoserine. Residues serine 231, serine 232, serine 250, and serine 253 each carry the phosphoserine modification. The disordered stretch occupies residues 255–329 (TSKNLPPSGA…REAGEQGDIE (75 aa)). 2 stretches are compositionally biased toward basic and acidic residues: residues 297-307 (PQRDQRVREQR) and 318-329 (PIREAGEQGDIE). Positions 340 to 415 (HQLFIGNLPH…VRLNVEEKKT (76 aa)) constitute an RRM domain. Glycyl lysine isopeptide (Lys-Gly) (interchain with G-Cter in ubiquitin) cross-links involve residues lysine 353 and lysine 357. Serine 373 carries the phosphoserine modification. Lysine 376 participates in a covalent cross-link: Glycyl lysine isopeptide (Lys-Gly) (interchain with G-Cter in ubiquitin). An N6-acetyllysine; alternate modification is found at lysine 376. Lysine 376 participates in a covalent cross-link: Glycyl lysine isopeptide (Lys-Gly) (interchain with G-Cter in SUMO2); alternate. A Glycyl lysine isopeptide (Lys-Gly) (interchain with G-Cter in ubiquitin); alternate cross-link involves residue lysine 393. The RG-rich region stretch occupies residues 410–466 (VEEKKTRAAREGDRRDNRLRGPGGPRGGLGGGMRGPPRGGMVQKPGFGVGRGLAPRQ). The segment covering 413–428 (KKTRAAREGDRRDNRL) has biased composition (basic and acidic residues). Residues 413-466 (KKTRAAREGDRRDNRLRGPGGPRGGLGGGMRGPPRGGMVQKPGFGVGRGLAPRQ) form a disordered region. Arginine 429 bears the Asymmetric dimethylarginine mark. The span at 430 to 447 (GPGGPRGGLGGGMRGPPR) shows a compositional bias: gly residues. Arginine 435 is subject to Asymmetric dimethylarginine; alternate. A Dimethylated arginine; alternate modification is found at arginine 435. An Omega-N-methylarginine; alternate modification is found at arginine 435. Position 447 is an omega-N-methylarginine (arginine 447). Arginine 460 bears the Dimethylated arginine; alternate mark. Arginine 460 is subject to Omega-N-methylarginine; alternate. Arginine 465 is subject to Omega-N-methylarginine.

In terms of assembly, homodimer and oligomer. Component of a TAU mRNP complex, at least composed of IGF2BP1, ELAVL4 and G3BP1. Binds to the SH3 domain of Ras GTPase-activating protein (RASA1) in proliferating cells. No interaction in quiescent cells. Interacts (via NTF2 domain) with USP10; inhibiting stress granule formation by lowering G3BP1 valence. Interacts (via NTF2 domain) with CAPRIN1; promoting stress granule formation by lowering the saturation-concentration of G3BP1. Interacts (via NTF2 domain) with UBAP2L; promoting stress granule formation. Associates (via RG-rich region) with 40S ribosome subunits. Interacts with RPTOR and SPAG5; this complex is increased by oxidative stress. Interacts with ATXN2L. Interacts with STYXL1. Interacts with CGAS (via N-terminus); this interaction promotes the DNA-binding and activation of CGAS. Interacts (via C-terminus) with RIGI. Interacts with PABPC1. Interacts with QKI (isoforms QKI6 and QKI7); directing N(7)-methylguanine-containing mRNAs to stress granules. As to quaternary structure, (Microbial infection) Interacts with Semliki forest virus non-structural protein 3 (via C-terminus); this interaction inhibits the formation of stress granules on viral mRNAs and the nsp3-G3BP1 complexes bind viral RNAs and probably orchestrate the assembly of viral replication complexes. (Microbial infection) Interacts with Chikungunya virus non-structural protein 3 (via C-terminus); this interaction inhibits the formation of stress granules on viral mRNAs and the nsp3-G3BP1 complexes bind viral RNAs and probably orchestrate the assembly of viral replication complexes. In terms of assembly, (Microbial infection) Interacts with Sindbis virus non-structural protein 3 (via C-terminus); this interaction inhibits the formation of stress granules on viral mRNAs and the nsp3-G3BP1 complexes bind viral RNAs and probably orchestrate the assembly of viral replication complexes. As to quaternary structure, (Microbial infection) Interacts with Zika virus capsid protein C; this interaction is probably linked to the inhibition of stress granules formation by the virus. (Microbial infection) Interacts with reovirus type 2 protein sigma-NS; this interaction induces the relocalization of G3BP1 to the outer periphery of sigma-NS/mu-Ns viral factories and is probably involved in the suppression of the integrated stress response by the virus. In terms of assembly, (Microbial infection) Interacts with SARS-CoV-2 N protein; the interaction is enhanced by host HDAC6 which deacetylates the viral N protein and promotes N protein association with G3BP1, disrupting stress granule formation and facilitating viral replication. Interacts with HDAC6; the interaction increases during SARS-CoV-2 infection. Mg(2+) is required as a cofactor. Post-translationally, phosphorylation of the acidic disordered region regulates stress granule assembly. RASA1-dependent phosphorylation of Ser-149 induces a conformational change that prevents self-association. Dephosphorylation after HRAS activation is required for stress granule assembly. Ser-149 phosphorylation induces partial nuclear localization. In terms of processing, ubiquitinated by TRIM21 via 'Lys-63'-linked polyubiquitination in the NTF2 domain in response to heat shock, leading to stress granule disassembly: ubiquitination promotes interaction with the FAF2 adapter, followed by interaction with VCP, which extracts G3BP1 from stress granules, leading to stress granule disassembly. In case of prolonged stress, ubiquitination by TRIM21 leads to autophagy-dependent degradation of G3BP1 via recruitment of ubiquitinated G3BP1 by SQSTM1 and/or CALCOCO2 to autophagosomes. (Microbial infection) Cleaved by human enterovirus 71; this cleavage induces the disassembly of cytoplasmic stress granules. Cleaved by Foot-and-mouth disease virus; this cleavage suppresses the formation of cytoplasmic stress granules. Post-translationally, arg-435 is dimethylated, probably to asymmetric dimethylarginine. In terms of processing, (Microbial infection) Cleaved by Encephalomyocarditis virus protease 3C; this cleavage suppresses the formation of cytoplasmic stress granules. As to expression, ubiquitous.

It localises to the cytoplasm. The protein resides in the cytosol. It is found in the perikaryon. Its subcellular location is the stress granule. The protein localises to the nucleus. It carries out the reaction ATP + H2O = ADP + phosphate + H(+). Its activity is regulated as follows. Under physiological conditions, G3BP1 adopts a compact state that is stabilized by intramolecular interactions between the RG-rich and the acidic regions that inhibit phase separation. Upon stress, polysomes disassemble and mRNAs are released in an unfolded protein-free state. Binding of unfolded mRNA to G3BP1 outcompetes the intramolecular interactions and RNA-bound G3BP1 adopts an expanded conformation in which the RG-rich region becomes exposed to engage in protein-protein and protein-RNA interactions, allowing physical cross-linking of RNA molecules to form protein-RNA condensates, leading to liquid-liquid phase separation (LLPS). In terms of biological role, protein involved in various processes, such as stress granule formation and innate immunity. Plays an essential role in stress granule formation. Stress granules are membraneless compartments that store mRNAs and proteins, such as stalled translation pre-initiation complexes, in response to stress. Promotes formation of stress granules phase-separated membraneless compartment by undergoing liquid-liquid phase separation (LLPS) upon unfolded RNA-binding: functions as a molecular switch that triggers RNA-dependent LLPS in response to a rise in intracellular free RNA concentrations. Also acts as an ATP- and magnesium-dependent helicase: unwinds DNA/DNA, RNA/DNA, and RNA/RNA substrates with comparable efficiency. Acts unidirectionally by moving in the 5' to 3' direction along the bound single-stranded DNA. Unwinds preferentially partial DNA and RNA duplexes having a 17 bp annealed portion and either a hanging 3' tail or hanging tails at both 5'- and 3'-ends. Plays an essential role in innate immunity by promoting CGAS and RIGI activity. Participates in the DNA-triggered cGAS/STING pathway by promoting the DNA binding and activation of CGAS. Triggers the condensation of cGAS, a process probably linked to the formation of membrane-less organelles. Also enhances RIGI-induced type I interferon production probably by helping RIGI at sensing pathogenic RNA. May also act as a phosphorylation-dependent sequence-specific endoribonuclease in vitro: Cleaves exclusively between cytosine and adenine and cleaves MYC mRNA preferentially at the 3'-UTR. In Homo sapiens (Human), this protein is Ras GTPase-activating protein-binding protein 1.